Consider the following 374-residue polypeptide: Ribosomal RNA large subunit methyltransferase G (374 aa).

It belongs to the methyltransferase superfamily. RlmG family.

The protein resides in the cytoplasm. The catalysed reaction is guanosine(1835) in 23S rRNA + S-adenosyl-L-methionine = N(2)-methylguanosine(1835) in 23S rRNA + S-adenosyl-L-homocysteine + H(+). In terms of biological role, specifically methylates the guanine in position 1835 (m2G1835) of 23S rRNA. The polypeptide is Ribosomal RNA large subunit methyltransferase G (Ectopseudomonas mendocina (strain ymp) (Pseudomonas mendocina)).